The following is a 1091-amino-acid chain: Rho GTPase-activating protein 7 (1091 aa).

An SAM domain is found at 11–78 (LTQIEAKEAC…LNKCAVMKLE (68 aa)). Phosphoserine is present on residues Ser86, Ser89, and Ser129. 4 disordered regions span residues 120 to 181 (SPKQ…TTPR), 296 to 329 (RSVSNSTQTSSSSSQSETSSAVSTPSPVTRTRSL), 402 to 439 (RTGSFHGPGHLSLRRENSSDSPKELKRRNSSSSVSSRM), and 491 to 552 (SDEG…SGVG). Positions 130 to 143 (PDNSRLQSATSRES) are enriched in polar residues. Low complexity-rich tracts occupy residues 155 to 166 (SSIRSLSSTSSS) and 298 to 324 (VSNSTQTSSSSSQSETSSAVSTPSPVT). Positions 274–447 (QLNCVEISAL…RMSIYDNVPG (174 aa)) are focal adhesion-targeting (FAT). The residue at position 321 (Ser321) is a Phosphoserine. Residues 414–425 (LRRENSSDSPKE) show a composition bias toward basic and acidic residues. Residues 499 to 511 (ALDSVSPCPSSPK) are compositionally biased toward polar residues. A compositionally biased stretch (basic and acidic residues) spans 513–525 (IHLDVDHDRRTPS). Residues 526 to 535 (DLDSTGNSLN) show a composition bias toward polar residues. The segment at 614-636 (KHGFSWAVPKFMKRIKVPDYKDR) is polybasic cluster (PBR). Residues 641 to 847 (VPLTVNVQRS…HMIAECKKLF (207 aa)) form the Rho-GAP domain. An START domain is found at 877–1084 (SNDQPADYRH…RDSFSNQSTE (208 aa)).

Interacts with EF1A1, facilitates EF1A1 distribution to the membrane periphery and ruffles upon growth factor stimulation and suppresses cell migration. Interacts with tensin TNS1 (via N-terminus); the interaction is decreased by phosphorylation of TNS1. Interacts with TNS3 and PTEN; in resting cells, interacts with TNS3 (via C2 tensin-type domain) but, following growth factor stimulation, TNS3 and PTEN are phosphorylated which leads to weakened interaction with TNS3 and enhanced interaction with PTEN. Interacts (via C-terminus) with tensin TNS4 (via SH2 domain); the interaction is independent of tyrosine phosphorylation of DLC1.

It is found in the cytoplasm. It localises to the cell junction. Its subcellular location is the focal adhesion. The protein localises to the membrane. Functionally, functions as a GTPase-activating protein for the small GTPases RHOA, RHOB, RHOC and CDC42, terminating their downstream signaling. This induces morphological changes and detachment through cytoskeletal reorganization, playing a critical role in biological processes such as cell migration and proliferation. Also functions in vivo as an activator of the phospholipase PLCD1. Active DLC1 increases cell migration velocity but reduces directionality. Required for growth factor-induced epithelial cell migration; in resting cells, interacts with TNS3 while PTEN interacts with the p85 regulatory subunit of the PI3K kinase complex but growth factor stimulation induces phosphorylation of TNS3 and PTEN, causing them to change their binding preference so that PTEN interacts with DLC1 and TNS3 interacts with p85. The PTEN-DLC1 complex translocates to the posterior of migrating cells to activate RHOA while the TNS3-p85 complex translocates to the leading edge of migrating cells to promote RAC1 activation. This Rattus norvegicus (Rat) protein is Rho GTPase-activating protein 7 (Dlc1).